Here is a 434-residue protein sequence, read N- to C-terminus: Progestin and adipoQ receptor-like protein 1 (434 aa).

At 1–201 (MNPDEVNRAL…KSIWSLHTET (201 aa)) the chain is on the cytoplasmic side. 2 disordered regions span residues 74–103 (LPQQ…MPKH) and 118–137 (EINL…ELEV). The chain crosses the membrane as a helical span at residues 202–222 (GNIWTHLIGCVAFFFLACWFL). Topologically, residues 223 to 234 (TRPDNHIQFQEK) are extracellular. The chain crosses the membrane as a helical span at residues 235-255 (VVFSFFFAGAVLCLGLSFAFH). The Cytoplasmic portion of the chain corresponds to 256–273 (TLSCHSVNVVKIFCKLDY). A helical membrane pass occupies residues 274-294 (MGISLLIIGSFIPWIYYGFYC). Over 295 to 299 (RREPK) the chain is Extracellular. Residues 300 to 320 (ITYIAMVSVLGIGAIVVSLWD) traverse the membrane as a helical segment. Residues 321–331 (KFSESRFRPIR) lie on the Cytoplasmic side of the membrane. The helical transmembrane segment at 332 to 352 (AAVFVGMGCSGVIPTIHYIIT) threads the bilayer. Over 353 to 362 (DGVHSLFADN) the chain is Extracellular. Residues 363–383 (SFHWLLLMAFLYLLGAGLYAT) form a helical membrane-spanning segment. Topologically, residues 384-403 (RTPERFFPGKCDIWFQSHQL) are cytoplasmic. Residues 404 to 424 (FHTCVVIAAFVHYYGISEMAF) traverse the membrane as a helical segment. At 425 to 434 (ARLNEQCPVR) the chain is on the extracellular side.

This sequence belongs to the ADIPOR family.

It is found in the membrane. Probable receptor, which may be involved in metabolic pathways that regulate lipid metabolism such as fatty acid oxidation. The polypeptide is Progestin and adipoQ receptor-like protein 1 (paqr-1) (Caenorhabditis elegans).